The chain runs to 68 residues: Conotoxin VnMMSK-01 (68 aa).

Positions 1–20 (MMSKLGVLLTICLLLFPLTA) are cleaved as a signal peptide. The propeptide occupies 21–50 (VPMDGDQPADLPALRTQDFEPERSPWFDPV). 3 disulfides stabilise this stretch: Cys-53-Cys-65, Cys-54-Cys-61, and Cys-58-Cys-64. Pro-63 is modified (4-hydroxyproline).

The protein belongs to the conotoxin M superfamily. In terms of tissue distribution, expressed by the venom duct.

It localises to the secreted. The chain is Conotoxin VnMMSK-01 from Conus ventricosus (Mediterranean cone).